The following is an 896-amino-acid chain: Echinoderm microtubule-associated protein-like 3 (896 aa).

Methionine 1 carries the post-translational modification N-acetylmethionine. A coiled-coil region spans residues 16–43; it reads LQSLSQRLRVQEQEMELVKAALAEALRL. The tract at residues 50–209 is disordered; it reads PSSLQGSGTP…GGPGSRRSNY (160 aa). A compositionally biased stretch (polar residues) spans 77 to 88; that stretch reads TPSLVSRGTQTE. The segment covering 134–145 has biased composition (pro residues); it reads PGPPGILRPLQP. Low complexity predominate over residues 154 to 163; it reads RNSSSSSSPS. The segment covering 174–189 has biased composition (polar residues); the sequence is AISSANLLVRSGSTES. Residues serine 176, serine 198, and serine 204 each carry the phosphoserine modification. WD repeat units follow at residues 234–286, 295–344, 350–392, 398–434, 448–487, 504–543, 549–584, 589–626, 629–667, 674–709, 716–755, 765–823, and 830–869; these read RSLE…LYRP, GGGQ…IWDS, LQEI…VWDC, LAEI…FWNW, RKQG…TWGR, YGIV…QWGP, QEAE…LRGD, FSPV…LWDG, HALA…VLDT, SDVI…IYSV, SSRF…YWDV, RYES…LFQY, and APSR…QWRV. The segment at 876 to 896 is disordered; that stretch reads GPAPATPSRTPSLSPASSLDV. The segment covering 877–896 has biased composition (low complexity); it reads PAPATPSRTPSLSPASSLDV. Threonine 881 carries the post-translational modification Phosphothreonine; by CDK1. Serine 883 bears the Phosphoserine mark.

The protein belongs to the WD repeat EMAP family. As to quaternary structure, homotrimer; self-association is mediated by the N-terminal coiled coil. Interacts with EML2 but not with EML1. Interacts (phosphorylated at Thr-881) with TUBG1, HAUS1, HAUS2, HAUS3, HAUS4, HAUS5, HAUS6, HAUS7 and HAUS8. In terms of processing, phosphorylation at Thr-881 during mitosis is required for interaction with TUBG1, HAUS1, HAUS2, HAUS3, HAUS4, HAUS5, HAUS6, HAUS7 and HAUS8 and their recruitment to spindle microtubules.

The protein resides in the cytoplasm. The protein localises to the cytoskeleton. Its subcellular location is the nucleus. It localises to the midbody. It is found in the spindle. In terms of biological role, regulates mitotic spindle assembly, microtubule (MT)-kinetochore attachment and chromosome separation via recruitment of HAUS augmin-like complex and TUBG1 to the existing MTs and promoting MT-based MT nucleation. Required for proper alignnment of chromosomes during metaphase. The sequence is that of Echinoderm microtubule-associated protein-like 3 (EML3) from Homo sapiens (Human).